Here is a 147-residue protein sequence, read N- to C-terminus: Lysozyme C-3 (147 aa).

The signal sequence occupies residues 1-18 (MKALVILGLLFLSVAVQG). The 129-residue stretch at 19-147 (KVFERCELAR…VSSYVEGCKL (129 aa)) folds into the C-type lysozyme domain. Disulfide bonds link Cys24–Cys145, Cys48–Cys133, Cys83–Cys99, and Cys95–Cys113. Catalysis depends on residues Glu53 and Asp71.

It belongs to the glycosyl hydrolase 22 family. As to quaternary structure, monomer. Expressed in stomach.

It localises to the secreted. The enzyme catalyses Hydrolysis of (1-&gt;4)-beta-linkages between N-acetylmuramic acid and N-acetyl-D-glucosamine residues in a peptidoglycan and between N-acetyl-D-glucosamine residues in chitodextrins.. Lysozymes have primarily a bacteriolytic function; those in tissues and body fluids are associated with the monocyte-macrophage system and enhance the activity of immunoagents. The chain is Lysozyme C-3 from Ovis aries (Sheep).